The primary structure comprises 101 residues: Putative pterin-4-alpha-carbinolamine dehydratase (101 aa).

This sequence belongs to the pterin-4-alpha-carbinolamine dehydratase family.

It catalyses the reaction (4aS,6R)-4a-hydroxy-L-erythro-5,6,7,8-tetrahydrobiopterin = (6R)-L-erythro-6,7-dihydrobiopterin + H2O. The protein is Putative pterin-4-alpha-carbinolamine dehydratase (phhB) of Ralstonia nicotianae (strain ATCC BAA-1114 / GMI1000) (Ralstonia solanacearum).